A 23-amino-acid chain; its full sequence is Coenzyme PQQ synthesis protein A (23 aa).

The segment at residues 15–19 (EVTMY) is a cross-link (pyrroloquinoline quinone (Glu-Tyr)).

The protein belongs to the PqqA family.

Its pathway is cofactor biosynthesis; pyrroloquinoline quinone biosynthesis. In terms of biological role, required for coenzyme pyrroloquinoline quinone (PQQ) biosynthesis. PQQ is probably formed by cross-linking a specific glutamate to a specific tyrosine residue and excising these residues from the peptide. In Pseudomonas putida (strain W619), this protein is Coenzyme PQQ synthesis protein A.